We begin with the raw amino-acid sequence, 243 residues long: Small ribosomal subunit protein uS3 (243 aa).

In terms of domain architecture, KH type-2 spans 39–110; sequence IRTFIQKKYG…QVRINVVEVE (72 aa). Residues 216–243 form a disordered region; it reads QTIPVGASPKRKASRRPQQFEDRSNENS. Basic and acidic residues predominate over residues 233-243; the sequence is QQFEDRSNENS.

The protein belongs to the universal ribosomal protein uS3 family. Part of the 30S ribosomal subunit. Forms a tight complex with proteins S10 and S14.

In terms of biological role, binds the lower part of the 30S subunit head. Binds mRNA in the 70S ribosome, positioning it for translation. This is Small ribosomal subunit protein uS3 from Prochlorococcus marinus (strain AS9601).